Reading from the N-terminus, the 480-residue chain is Gasdermin-C4 (480 aa).

Positions 1–226 (MGYSFDRASK…TCVILPSATK (226 aa)) are triggers pyroptosis.

This sequence belongs to the gasdermin family. In terms of assembly, homooligomer; homooligomeric ring-shaped pore complex containing 27-28 subunits when inserted in the membrane. Cleavage by CASP8 relieves autoinhibition by releasing the N-terminal moiety (Gasdermin-C4, N-terminal) that initiates pyroptosis. In terms of processing, palmitoylated.

The protein localises to the cytoplasm. It localises to the cytosol. Its subcellular location is the cell membrane. With respect to regulation, the full-length protein before cleavage is inactive: intramolecular interactions between N- and C-terminal domains mediate autoinhibition in the absence of activation signal. The intrinsic pyroptosis-inducing activity is carried by the released N-terminal moiety (Gasdermin-C4, N-terminal) following cleavage by caspase CASP8. Its function is as follows. This form constitutes the precursor of the pore-forming protein: upon cleavage, the released N-terminal moiety (Gasdermin-C4, N-terminal) binds to membranes and forms pores, triggering pyroptosis. Functionally, pore-forming protein that causes membrane permeabilization and pyroptosis. Produced by the cleavage of gasdermin-C4 by caspase CASP8 in response to death signals. After cleavage, moves to the plasma membrane where it strongly binds to membrane inner leaflet lipids. Homooligomerizes within the membrane and forms pores of 10-15 nanometers (nm) of inner diameter, triggering pyroptosis. This chain is Gasdermin-C4, found in Mus musculus (Mouse).